Reading from the N-terminus, the 756-residue chain is U3 small nucleolar RNA-associated protein 14 homolog B (756 aa).

The segment at 21-44 is disordered; sequence DLPENYPLSTSEDEGDSDGEGKRQ. 3 positions are modified to phosphoserine: Ser-29, Ser-31, and Ser-37. Coiled coils occupy residues 215 to 244 and 316 to 345; these read SLEE…RREK and PEAR…SEEE. Basic and acidic residues-rich tracts occupy residues 419 to 428 and 452 to 468; these read KERSFQERVD and LNKE…SSEE. 2 disordered regions span residues 419–468 and 497–539; these read KERS…SSEE and QQGE…KKKK. A coiled-coil region spans residues 449-476; sequence LQKLNKESHQSDNQKVSSEENVLHIQRE. At Ser-554 the chain carries Phosphoserine.

This sequence belongs to the UTP14 family. As to expression, expressed predominantly in germ cells of the testis; weakly expressed in brain.

The protein localises to the nucleus. Its subcellular location is the nucleolus. In terms of biological role, essential for spermatogenesis. May be required specifically for ribosome biogenesis and hence protein synthesis during male meiosis. The chain is U3 small nucleolar RNA-associated protein 14 homolog B (Utp14b) from Mus musculus (Mouse).